We begin with the raw amino-acid sequence, 472 residues long: Methanethiol oxidase (472 aa).

At Ala2 the chain carries N-acetylalanine. Phosphoserine is present on residues Ser111, Ser371, and Ser467.

This sequence belongs to the selenium-binding protein family. Interacts with USP33. In terms of processing, phosphorylated. The N-terminus is blocked. As to expression, widely expressed. Highly expressed in liver, lung, colon, prostate, kidney and pancreas. In brain, present both in neurons and glia (at protein level). Down-regulated in lung adenocarcinoma, colorectal carcinoma and ovarian cancer. Two-fold up-regulated in brain and blood from schizophrenia patients.

The protein localises to the nucleus. Its subcellular location is the cytoplasm. It localises to the cytosol. The protein resides in the membrane. It carries out the reaction methanethiol + O2 + H2O = hydrogen sulfide + formaldehyde + H2O2 + H(+). It functions in the pathway organosulfur degradation. Functionally, catalyzes the oxidation of methanethiol, an organosulfur compound known to be produced in substantial amounts by gut bacteria. Selenium-binding protein which may be involved in the sensing of reactive xenobiotics in the cytoplasm. May be involved in intra-Golgi protein transport. In Homo sapiens (Human), this protein is Methanethiol oxidase (SELENBP1).